We begin with the raw amino-acid sequence, 283 residues long: Bifunctional protein FolD 2 (283 aa).

Residues 165 to 167 (GAS), Ser-190, and Ile-231 each bind NADP(+).

Belongs to the tetrahydrofolate dehydrogenase/cyclohydrolase family. In terms of assembly, homodimer.

The catalysed reaction is (6R)-5,10-methylene-5,6,7,8-tetrahydrofolate + NADP(+) = (6R)-5,10-methenyltetrahydrofolate + NADPH. The enzyme catalyses (6R)-5,10-methenyltetrahydrofolate + H2O = (6R)-10-formyltetrahydrofolate + H(+). Its pathway is one-carbon metabolism; tetrahydrofolate interconversion. Functionally, catalyzes the oxidation of 5,10-methylenetetrahydrofolate to 5,10-methenyltetrahydrofolate and then the hydrolysis of 5,10-methenyltetrahydrofolate to 10-formyltetrahydrofolate. In Bordetella pertussis (strain Tohama I / ATCC BAA-589 / NCTC 13251), this protein is Bifunctional protein FolD 2.